We begin with the raw amino-acid sequence, 736 residues long: Myosin-7 (736 aa).

The 342-residue stretch at 1–342 folds into the Myosin motor domain; sequence NWMVTRINAT…LLGLLEEMRD (342 aa). An actin-binding region spans residues 219–241; that stretch reads LNKLMTNLRSTHPHFVRCIIPNE. The 30-residue stretch at 345–374 folds into the IQ domain; the sequence is LSRIITRIQAQSRGVLSRMEYKKLLERRDS. A coiled-coil region spans residues 403-736; sequence LLKSAETEKE…MNKKREAEFQ (334 aa). Phosphoserine is present on Ser701. The segment at 716-736 is disordered; that stretch reads EAGGATSVQIEMNKKREAEFQ. Basic and acidic residues predominate over residues 727-736; it reads MNKKREAEFQ.

Belongs to the TRAFAC class myosin-kinesin ATPase superfamily. Myosin family. In terms of assembly, muscle myosin is a hexameric protein that consists of 2 heavy chain subunits (MHC), 2 alkali light chain subunits (MLC) and 2 regulatory light chain subunits (MLC-2). Interacts with ECPAS. Interacts (via C-terminus) with LRRC39.

The protein resides in the cytoplasm. The protein localises to the myofibril. Its subcellular location is the sarcomere. Functionally, myosins are actin-based motor molecules with ATPase activity essential for muscle contraction. Forms regular bipolar thick filaments that, together with actin thin filaments, constitute the fundamental contractile unit of skeletal and cardiac muscle. This chain is Myosin-7 (MYH7), found in Oryctolagus cuniculus (Rabbit).